Reading from the N-terminus, the 308-residue chain is N-acetylmuramic acid 6-phosphate etherase (308 aa).

Residues 59–222 (TAERLRHGGR…STGVMVKLGK (164 aa)) enclose the SIS domain. Catalysis depends on Glu87, which acts as the Proton donor. Glu118 is a catalytic residue.

It belongs to the GCKR-like family. MurNAc-6-P etherase subfamily. In terms of assembly, homodimer.

The enzyme catalyses N-acetyl-D-muramate 6-phosphate + H2O = N-acetyl-D-glucosamine 6-phosphate + (R)-lactate. It functions in the pathway amino-sugar metabolism; N-acetylmuramate degradation. Its function is as follows. Specifically catalyzes the cleavage of the D-lactyl ether substituent of MurNAc 6-phosphate, producing GlcNAc 6-phosphate and D-lactate. The protein is N-acetylmuramic acid 6-phosphate etherase of Nostoc punctiforme (strain ATCC 29133 / PCC 73102).